A 642-amino-acid polypeptide reads, in one-letter code: Bud site selection protein 5 (642 aa).

An N-terminal Ras-GEF domain is found at 224 to 339 (EVFRIQLYLN…DIVQLFINKK (116 aa)). The Ras-GEF domain occupies 412–640 (SPWSLAKTLT…YQVSIAKVPR (229 aa)).

In terms of assembly, interacts with AXL2, BEM1, GSP1 and in haploid cells with AXL1.

The protein localises to the bud neck. The protein resides in the cytoplasm. It localises to the cell cortex. GDP-GTP exchange factor (GEF) for the small GTPase BUD1/RSR1. Regulates the activity of BUD1 together with BUD2 which is a GTPase-activating protein (GAP) of BUD1. Required to produce both the axial and bipolar patterns of bud site selection. Determines the orientation of division axis. Overexpression can suppress mutations in PRP20 which is the GEF for GSP1. May be a cytoplasmic GEF for GSP1. Might also act on the Ras-like protein CDC42. Appears to bind to Ras proteins but not to activate them. The protein is Bud site selection protein 5 (BUD5) of Saccharomyces cerevisiae (strain ATCC 204508 / S288c) (Baker's yeast).